We begin with the raw amino-acid sequence, 157 residues long: uncharacterized protein (157 aa).

This sequence to E.coli YcjD and H.influenzae HI_0925.

This is an uncharacterized protein from Haemophilus influenzae (strain ATCC 51907 / DSM 11121 / KW20 / Rd).